We begin with the raw amino-acid sequence, 146 residues long: Large ribosomal subunit protein uL15 (146 aa).

Basic and acidic residues predominate over residues 1 to 13 (MKLHELKPAEGSR). The disordered stretch occupies residues 1–56 (MKLHELKPAEGSRKVRNRVGRGAATGNGKTSGRGQKGQKARSGGSVRPGFEGGQLP). Gly residues predominate over residues 23-35 (AATGNGKTSGRGQ).

It belongs to the universal ribosomal protein uL15 family. In terms of assembly, part of the 50S ribosomal subunit.

Binds to the 23S rRNA. The protein is Large ribosomal subunit protein uL15 of Staphylococcus saprophyticus subsp. saprophyticus (strain ATCC 15305 / DSM 20229 / NCIMB 8711 / NCTC 7292 / S-41).